Reading from the N-terminus, the 311-residue chain is Bifunctional protein FolD (311 aa).

174–176 contacts NADP(+); it reads GKG.

The protein belongs to the tetrahydrofolate dehydrogenase/cyclohydrolase family. In terms of assembly, homodimer.

It carries out the reaction (6R)-5,10-methylene-5,6,7,8-tetrahydrofolate + NADP(+) = (6R)-5,10-methenyltetrahydrofolate + NADPH. It catalyses the reaction (6R)-5,10-methenyltetrahydrofolate + H2O = (6R)-10-formyltetrahydrofolate + H(+). It participates in one-carbon metabolism; tetrahydrofolate interconversion. Catalyzes the oxidation of 5,10-methylenetetrahydrofolate to 5,10-methenyltetrahydrofolate and then the hydrolysis of 5,10-methenyltetrahydrofolate to 10-formyltetrahydrofolate. The protein is Bifunctional protein FolD of Pyrobaculum arsenaticum (strain DSM 13514 / JCM 11321 / PZ6).